The chain runs to 948 residues: Valine--tRNA ligase (948 aa).

Positions 40–50 match the 'HIGH' region motif; the sequence is PNVTGSLHMGH. Residues 551–555 carry the 'KMSKS' region motif; that stretch reads KMSKS. K554 lines the ATP pocket. Residues 879-945 are a coiled coil; the sequence is LIDKGAELAR…GKLAEQHARI (67 aa).

The protein belongs to the class-I aminoacyl-tRNA synthetase family. ValS type 1 subfamily. In terms of assembly, monomer.

It localises to the cytoplasm. The enzyme catalyses tRNA(Val) + L-valine + ATP = L-valyl-tRNA(Val) + AMP + diphosphate. In terms of biological role, catalyzes the attachment of valine to tRNA(Val). As ValRS can inadvertently accommodate and process structurally similar amino acids such as threonine, to avoid such errors, it has a 'posttransfer' editing activity that hydrolyzes mischarged Thr-tRNA(Val) in a tRNA-dependent manner. The chain is Valine--tRNA ligase from Pseudomonas savastanoi pv. phaseolicola (strain 1448A / Race 6) (Pseudomonas syringae pv. phaseolicola (strain 1448A / Race 6)).